Here is a 381-residue protein sequence, read N- to C-terminus: Trans-enoyl reductase iliB (381 aa).

50–53 (VDGK) contributes to the NADP(+) binding site. Substrate is bound at residue 145–152 (ATLATVGL). NADP(+)-binding positions include 213–216 (SPGS), tyrosine 231, and 278–279 (LD). 298 to 302 (TYTQF) is a substrate binding site. 367 to 368 (IS) serves as a coordination point for NADP(+).

It belongs to the zinc-containing alcohol dehydrogenase family. Monomer.

The enzyme catalyses N-[(4E,6E,10S,12Z,14E)-6,10-dimethyl-3-oxohexadeca-4,6,12,14-tetraenoyl]-L-tyrosyl-[ACP] = (3E,5S)-3-[(2E,4E,8S,10E,12Z)-1-hydroxy-4,8-dimethyltetradeca-2,4,10,12-tetraen-1-ylidene]-5-[(4-hydroxyphenyl)methyl]pyrrolidine-2,4-dione + holo-[ACP] + H(+). It participates in mycotoxin biosynthesis. Functionally, trans-enoyl reductase; part of the gene cluster that mediates the biosynthesis of ilicicolin H, a 4-hydroxy-2-pyridonealkaloid that has potent and broad antifungal activities by inhibiting the mitochondrial respiration chain. IliB collaborates with the hybrid PKS-NRPS synthetase iliA to assemble the backbone of ilicicolin H. The PKS portion of iliA and trans-acting enoyl reductase iliB work together to construct an octaketide, and two methyl groups are introduced by the MT domain of iliA during the chain assembly. The nascent chain is then condensed with tyrosine, catalyzed by the iliA C domain, and the resulting PKS-NRPS hybrid is offloaded by the iliA RED domain to form an advanced tetramic acid intermediate. The biosynthesis of ilicicolin H starts with formation of the tetramic acid by the hybrid PKS-NRPS synthetase iliA with the partnering trans-enoyl reductase iliB since iliA lacks a designated enoylreductase (ER) domain. The cytochrome P450 monooxygenase iliC then catalyzes the ring expansion of the tetramate to the acyclic 2-pyridone. The pericyclase iliD further converts the acyclic 2-pyridone into 8-epi-ilicicolin H. 8-epi-ilicicolin H might then spontaneously convert to ilicicolin H since ilicicolin H is produced in the absence of the epimerase iliE, in contrast to what was observed for the Talaromyces variabilis ilicolin H biosynthetic pathway. The chain is Trans-enoyl reductase iliB from Neonectria sp. (strain DH2).